Reading from the N-terminus, the 238-residue chain is 3,4-dihydroxy-2-butanone 4-phosphate synthase (238 aa).

Residues 26–27 (RE), D31, 166–170 (RVGQT), and E190 contribute to the D-ribulose 5-phosphate site. E27 is a Mg(2+) binding site.

The protein belongs to the DHBP synthase family. Homodimer. It depends on Mg(2+) as a cofactor. The cofactor is Mn(2+).

It carries out the reaction D-ribulose 5-phosphate = (2S)-2-hydroxy-3-oxobutyl phosphate + formate + H(+). It functions in the pathway cofactor biosynthesis; riboflavin biosynthesis; 2-hydroxy-3-oxobutyl phosphate from D-ribulose 5-phosphate: step 1/1. Its function is as follows. Catalyzes the conversion of D-ribulose 5-phosphate to formate and 3,4-dihydroxy-2-butanone 4-phosphate. The polypeptide is 3,4-dihydroxy-2-butanone 4-phosphate synthase (Archaeoglobus fulgidus (strain ATCC 49558 / DSM 4304 / JCM 9628 / NBRC 100126 / VC-16)).